The primary structure comprises 298 residues: ATP phosphoribosyltransferase (298 aa).

Belongs to the ATP phosphoribosyltransferase family. Long subfamily. Mg(2+) is required as a cofactor.

It is found in the cytoplasm. It catalyses the reaction 1-(5-phospho-beta-D-ribosyl)-ATP + diphosphate = 5-phospho-alpha-D-ribose 1-diphosphate + ATP. The protein operates within amino-acid biosynthesis; L-histidine biosynthesis; L-histidine from 5-phospho-alpha-D-ribose 1-diphosphate: step 1/9. With respect to regulation, feedback inhibited by histidine. Functionally, catalyzes the condensation of ATP and 5-phosphoribose 1-diphosphate to form N'-(5'-phosphoribosyl)-ATP (PR-ATP). Has a crucial role in the pathway because the rate of histidine biosynthesis seems to be controlled primarily by regulation of HisG enzymatic activity. This chain is ATP phosphoribosyltransferase, found in Aliivibrio salmonicida (strain LFI1238) (Vibrio salmonicida (strain LFI1238)).